Here is a 312-residue protein sequence, read N- to C-terminus: Homoserine kinase (312 aa).

Residue Pro-91–Cys-101 participates in ATP binding.

The protein belongs to the GHMP kinase family. Homoserine kinase subfamily.

Its subcellular location is the cytoplasm. It catalyses the reaction L-homoserine + ATP = O-phospho-L-homoserine + ADP + H(+). It participates in amino-acid biosynthesis; L-threonine biosynthesis; L-threonine from L-aspartate: step 4/5. Its function is as follows. Catalyzes the ATP-dependent phosphorylation of L-homoserine to L-homoserine phosphate. The sequence is that of Homoserine kinase from Blochmanniella pennsylvanica (strain BPEN).